The following is a 429-amino-acid chain: Histidine--tRNA ligase (429 aa).

The protein belongs to the class-II aminoacyl-tRNA synthetase family. As to quaternary structure, homodimer.

Its subcellular location is the cytoplasm. The enzyme catalyses tRNA(His) + L-histidine + ATP = L-histidyl-tRNA(His) + AMP + diphosphate + H(+). This is Histidine--tRNA ligase from Corynebacterium efficiens (strain DSM 44549 / YS-314 / AJ 12310 / JCM 11189 / NBRC 100395).